The following is a 314-amino-acid chain: Acetyl-coenzyme A carboxylase carboxyl transferase subunit beta (314 aa).

One can recognise a CoA carboxyltransferase N-terminal domain in the interval 25–294 (VWTKCDSCSQ…PGTKPIVAEF (270 aa)). Zn(2+) is bound by residues Cys-29, Cys-32, Cys-48, and Cys-51. The C4-type zinc-finger motif lies at 29-51 (CDSCSQVLYRAELERNLEVCPKC).

The protein belongs to the AccD/PCCB family. Acetyl-CoA carboxylase is a heterohexamer composed of biotin carboxyl carrier protein (AccB), biotin carboxylase (AccC) and two subunits each of ACCase subunit alpha (AccA) and ACCase subunit beta (AccD). It depends on Zn(2+) as a cofactor.

The protein localises to the cytoplasm. It catalyses the reaction N(6)-carboxybiotinyl-L-lysyl-[protein] + acetyl-CoA = N(6)-biotinyl-L-lysyl-[protein] + malonyl-CoA. It participates in lipid metabolism; malonyl-CoA biosynthesis; malonyl-CoA from acetyl-CoA: step 1/1. Its function is as follows. Component of the acetyl coenzyme A carboxylase (ACC) complex. Biotin carboxylase (BC) catalyzes the carboxylation of biotin on its carrier protein (BCCP) and then the CO(2) group is transferred by the transcarboxylase to acetyl-CoA to form malonyl-CoA. This Photorhabdus laumondii subsp. laumondii (strain DSM 15139 / CIP 105565 / TT01) (Photorhabdus luminescens subsp. laumondii) protein is Acetyl-coenzyme A carboxylase carboxyl transferase subunit beta.